A 212-amino-acid chain; its full sequence is Pyrrolidone-carboxylate peptidase (212 aa).

Residues Glu-80, Cys-143, and His-165 contribute to the active site.

The protein belongs to the peptidase C15 family. Homotetramer.

The protein localises to the cytoplasm. The enzyme catalyses Release of an N-terminal pyroglutamyl group from a polypeptide, the second amino acid generally not being Pro.. In terms of biological role, removes 5-oxoproline from various penultimate amino acid residues except L-proline. The sequence is that of Pyrrolidone-carboxylate peptidase from Vibrio campbellii (strain ATCC BAA-1116).